The following is a 490-amino-acid chain: GTPase Der (490 aa).

EngA-type G domains follow at residues 3-166 and 200-373; these read PVVA…AEAM and IKLA…DSAT. GTP contacts are provided by residues 9–16, 56–60, 118–121, 206–213, 253–257, and 318–321; these read GRPNVGKS, DTGGI, NKVD, GKPNVGKS, DTAGV, and NKWD. The KH-like domain occupies 374–458; it reads RRVSTSMLTR…PIQLRFQEGG (85 aa). The tract at residues 470-490 is disordered; the sequence is TVSQERRRKRMVGHIRDKNKD.

The protein belongs to the TRAFAC class TrmE-Era-EngA-EngB-Septin-like GTPase superfamily. EngA (Der) GTPase family. As to quaternary structure, associates with the 50S ribosomal subunit.

GTPase that plays an essential role in the late steps of ribosome biogenesis. The polypeptide is GTPase Der (Shewanella pealeana (strain ATCC 700345 / ANG-SQ1)).